We begin with the raw amino-acid sequence, 1188 residues long: AT-rich interactive domain-containing protein 5B (1188 aa).

K130 is covalently cross-linked (Glycyl lysine isopeptide (Lys-Gly) (interchain with G-Cter in SUMO2)). The tract at residues R251–G277 is disordered. S264 bears the Phosphoserine mark. In terms of domain architecture, ARID spans R318 to K410. An N6,N6-dimethyllysine modification is found at K336. The segment at E412–T611 is disordered. K445 is covalently cross-linked (Glycyl lysine isopeptide (Lys-Gly) (interchain with G-Cter in SUMO2)). Positions H446 to A458 are enriched in basic and acidic residues. Glycyl lysine isopeptide (Lys-Gly) (interchain with G-Cter in SUMO2) cross-links involve residues K494 and K496. Residues S597–N609 show a composition bias toward polar residues. Glycyl lysine isopeptide (Lys-Gly) (interchain with G-Cter in SUMO2) cross-links involve residues K767, K774, K803, and K810. 2 disordered regions span residues H846–R874 and D891–T918. The segment covering H847–E866 has biased composition (basic and acidic residues). Residues K893, K916, K920, and K935 each participate in a glycyl lysine isopeptide (Lys-Gly) (interchain with G-Cter in SUMO2) cross-link. The tract at residues R956 to P978 is disordered. Glycyl lysine isopeptide (Lys-Gly) (interchain with G-Cter in SUMO2) cross-links involve residues K988, K1000, and K1013. The tract at residues A1028 to K1070 is disordered. S1032 is modified (phosphoserine). The segment covering P1036–K1055 has biased composition (basic and acidic residues). Glycyl lysine isopeptide (Lys-Gly) (interchain with G-Cter in SUMO2) cross-links involve residues K1055 and K1070. At S1133 the chain carries Phosphoserine.

Belongs to the ARID5B family. Post-translationally, methylation at Lys-336 prevents DNA-binding. Demethylation by PHF2 promotes recruitment of the PHF2-ARID5B complex to promoters. Widely expressed, including in liver (at protein level).

The protein resides in the nucleus. Functionally, transcription coactivator that binds to the 5'-AATA[CT]-3' core sequence and plays a key role in adipogenesis and liver development. Acts by forming a complex with phosphorylated PHF2, which mediates demethylation at Lys-336, leading to target the PHF2-ARID5B complex to target promoters, where PHF2 mediates demethylation of dimethylated 'Lys-9' of histone H3 (H3K9me2), followed by transcription activation of target genes. The PHF2-ARID5B complex acts as a coactivator of HNF4A in liver. Required for adipogenesis: regulates triglyceride metabolism in adipocytes by regulating expression of adipogenic genes. Overexpression leads to induction of smooth muscle marker genes, suggesting that it may also act as a regulator of smooth muscle cell differentiation and proliferation. Represses the cytomegalovirus enhancer. In Homo sapiens (Human), this protein is AT-rich interactive domain-containing protein 5B (ARID5B).